The chain runs to 92 residues: MSKVCIIAWIYGRVQGVGFRYTTQYEAKKLGLTGYAKNLDDGSVEVVACGDEGQVEKLIQWLKSGGPRSARVERVLSEPHHPSGELTDFRIR.

The cysteines at positions 5 and 49 are disulfide-linked. One can recognise an Acylphosphatase-like domain in the interval 5-92; it reads CIIAWIYGRV…SGELTDFRIR (88 aa). Active-site residues include Arg20 and Asn38.

This sequence belongs to the acylphosphatase family.

The enzyme catalyses an acyl phosphate + H2O = a carboxylate + phosphate + H(+). The protein is Acylphosphatase of Escherichia coli O1:K1 / APEC.